The sequence spans 102 residues: Protein 108 (102 aa).

The N-terminal stretch at 1-30 is a signal peptide; it reads MASVKSSSSSSSSSFISLLLLILLVIVLQS. 4 disulfides stabilise this stretch: cysteine 41-cysteine 77, cysteine 51-cysteine 66, cysteine 67-cysteine 92, and cysteine 79-cysteine 99.

This sequence belongs to the A9/FIL1 family. Stamen- and tapetum-specific.

It localises to the secreted. The sequence is that of Protein 108 from Solanum lycopersicum (Tomato).